The following is a 522-amino-acid chain: N-acetylgalactosamine-6-sulfatase (522 aa).

An N-terminal signal peptide occupies residues 1-25 (MAPVAAATGWRLLLVLSAAGLGAAG). The interval 27 to 379 (PQPPNILLLL…PAMLGGQLTD (353 aa)) is catalytic domain. Ca(2+)-binding residues include Asp-38, Asp-39, and Cys-78. Residue Cys-78 is the Nucleophile of the active site. Cys-78 carries the 3-oxoalanine (Cys) modification. The active site involves His-141. Asn-203 carries an N-linked (GlcNAc...) asparagine glycan. The Ca(2+) site is built by Asp-288 and Asn-289. An intrachain disulfide couples Cys-308 to Cys-419. Asn-423 carries N-linked (GlcNAc...) asparagine glycosylation. 2 cysteine pairs are disulfide-bonded: Cys-489-Cys-518 and Cys-501-Cys-507.

This sequence belongs to the sulfatase family. In terms of assembly, homodimer. It depends on Ca(2+) as a cofactor. Post-translationally, the conversion to 3-oxoalanine (also known as C-formylglycine, FGly), of a serine or cysteine residue in prokaryotes and of a cysteine residue in eukaryotes, is critical for catalytic activity.

The protein resides in the lysosome. The catalysed reaction is Hydrolysis of the 6-sulfate groups of the N-acetyl-D-galactosamine 6-sulfate units of chondroitin sulfate and of the D-galactose 6-sulfate units of keratan sulfate.. This chain is N-acetylgalactosamine-6-sulfatase (GALNS), found in Canis lupus familiaris (Dog).